Reading from the N-terminus, the 322-residue chain is N-acetyl-gamma-glutamyl-phosphate reductase (322 aa).

C117 is a catalytic residue.

It belongs to the NAGSA dehydrogenase family. Type 2 subfamily.

Its subcellular location is the cytoplasm. The catalysed reaction is N-acetyl-L-glutamate 5-semialdehyde + phosphate + NADP(+) = N-acetyl-L-glutamyl 5-phosphate + NADPH + H(+). It functions in the pathway amino-acid biosynthesis; L-arginine biosynthesis; N(2)-acetyl-L-ornithine from L-glutamate: step 3/4. Its function is as follows. Catalyzes the NADPH-dependent reduction of N-acetyl-5-glutamyl phosphate to yield N-acetyl-L-glutamate 5-semialdehyde. This is N-acetyl-gamma-glutamyl-phosphate reductase from Trichormus variabilis (strain ATCC 29413 / PCC 7937) (Anabaena variabilis).